The following is a 296-amino-acid chain: Formylmethanofuran--tetrahydromethanopterin formyltransferase (296 aa).

The protein belongs to the FTR family. Homotetramer composed of two dimers. Dimerization is sufficient for enzyme activity, but tetramerization is required for high thermostability.

Its subcellular location is the cytoplasm. The catalysed reaction is N-formylmethanofuran + 5,6,7,8-tetrahydromethanopterin + H(+) = N(5)-formyl-5,6,7,8-tetrahydromethanopterin + methanofuran. The protein operates within one-carbon metabolism; methanogenesis from CO(2); 5,10-methenyl-5,6,7,8-tetrahydromethanopterin from CO(2): step 2/3. Its activity is regulated as follows. Requires high salt concentrations for activity and thermostability; 1.5-1.8 M KH(2)PO(4) stimulates activity while stabilizing the enzyme. In terms of biological role, catalyzes the reversible transfer of a formyl group from formylmethanofuran (formyl-MFR) to tetrahydromethanopterin (H(4)MPT) to produce 5-formyl tetrahydromethanopterin (5-formyl-H(4)MPT) and methanofuran (MFR). Acts via a ternary-complex mechanism. Uses N-furfurylformamide much less efficiently, does not use N-methylformamide or formamide. Protein overexpressed in E.coli has very similar properties to enzyme purified from M.kandleri. The chain is Formylmethanofuran--tetrahydromethanopterin formyltransferase from Methanopyrus kandleri (strain AV19 / DSM 6324 / JCM 9639 / NBRC 100938).